The sequence spans 1051 residues: Putative helicase/primase complex protein (1051 aa).

This sequence belongs to the asfivirus F1055L family.

In terms of biological role, may be involved in DNA replication. The polypeptide is Putative helicase/primase complex protein (Ornithodoros (relapsing fever ticks)).